The primary structure comprises 481 residues: MSATMSSARNSVVSLSSNGSVKVETRLVSNERSSSIQQEGAMLPSSSSKDDDLLSTSSDEVENMATRTLQQLEESTSIISANSDDDSVKKEKQAEKDVEKGNGKEEKANIQNEFGVCGWILTILSYLLIFFTLPISACMCIKVVQEYERAVIFRLGRLMPGGAKGPGIFFIVPCIDTYRKVDLRVLSFEVPPQEILSKDSVTVAVDAVVYFRISNATISVTNVEDAARSTKLLAQTTLRNILGTKTLAEMLSDREAISHQMQTTLDEATEPWGVKVERVEVKDVRLPVQLQRAMAAEAEAAREARAKVIVAEGEQKASRALKEAAEVIAESPSALQLRYLQTLNSISAEKNSTIIFPFPIDLLSAFLQRTPPKVEEPPSLPKKIRSCCLYKYPDWVQGMVGSEGGGGHGHSHGGGGGGLGSSQGAFHPSQAGSGPSTTTTSGRPLLRSMREAQFHSAAPPISAPNQSQTSVSQLDPALLIR.

Positions 1–22 are enriched in low complexity; sequence MSATMSSARNSVVSLSSNGSVK. Disordered stretches follow at residues 1 to 67 and 80 to 104; these read MSAT…MATR and SANS…GNGK. Residues 27–38 are compositionally biased toward polar residues; it reads LVSNERSSSIQQ. The span at 86–104 shows a compositional bias: basic and acidic residues; sequence DSVKKEKQAEKDVEKGNGK. A helical transmembrane segment spans residues 115–135; sequence GVCGWILTILSYLLIFFTLPI. Residues 403–421 show a composition bias toward gly residues; that stretch reads EGGGGHGHSHGGGGGGLGS. Residues 403–481 form a disordered region; sequence EGGGGHGHSH…SQLDPALLIR (79 aa). Low complexity predominate over residues 433 to 447; it reads SGPSTTTTSGRPLLR. Over residues 463 to 473 the composition is skewed to polar residues; it reads APNQSQTSVSQ.

Belongs to the band 7/mec-2 family. In terms of assembly, component of a non-voltage-gated amiloride-sensitive cation channel complex (also called the degenerin channel complex) composed of at least the mec-2, mec-4, mec-6 and mec-10 subunits; the complex mediates mechanotransduction in touch cells. Interacts with mec-6 and mec-4.

The protein resides in the membrane. Subunit of an amiloride-sensitive cation channel (degenerin channel complex) permeable for sodium, potassium, lithium and N-methylglucamine, and required for mechanosensory transduction (touch sensitivity). Positively regulates the activity of the putative mechanosensory transduction channel. May link the mechanosensory channel and the microtubule cytoskeleton of the touch receptor neurons. Required for the function of a set of six touch receptor neurons. In Caenorhabditis elegans, this protein is Mechanosensory protein 2.